Reading from the N-terminus, the 460-residue chain is tRNA modification GTPase MnmE (460 aa).

The (6S)-5-formyl-5,6,7,8-tetrahydrofolate site is built by R26, E88, and R127. A TrmE-type G domain is found at 222–381; it reads GLKVAIVGRP…LESAILSKVQ (160 aa). N232 provides a ligand contact to K(+). GTP contacts are provided by residues 232–237, 251–257, and 276–279; these read NVGKSS, TELPGTT, and DTAG. S236 lines the Mg(2+) pocket. Residues T251, L253, and T256 each contribute to the K(+) site. T257 serves as a coordination point for Mg(2+). Residue K460 participates in (6S)-5-formyl-5,6,7,8-tetrahydrofolate binding.

Belongs to the TRAFAC class TrmE-Era-EngA-EngB-Septin-like GTPase superfamily. TrmE GTPase family. Homodimer. Heterotetramer of two MnmE and two MnmG subunits. K(+) serves as cofactor.

It localises to the cytoplasm. In terms of biological role, exhibits a very high intrinsic GTPase hydrolysis rate. Involved in the addition of a carboxymethylaminomethyl (cmnm) group at the wobble position (U34) of certain tRNAs, forming tRNA-cmnm(5)s(2)U34. The polypeptide is tRNA modification GTPase MnmE (Cyanothece sp. (strain PCC 7425 / ATCC 29141)).